The sequence spans 161 residues: ATP synthase subunit b 2 (161 aa).

A helical transmembrane segment spans residues 13-33 (IVWLVIALVAMYFVMSRLAIP).

The protein belongs to the ATPase B chain family. As to quaternary structure, F-type ATPases have 2 components, F(1) - the catalytic core - and F(0) - the membrane proton channel. F(1) has five subunits: alpha(3), beta(3), gamma(1), delta(1), epsilon(1). F(0) has three main subunits: a(1), b(2) and c(10-14). The alpha and beta chains form an alternating ring which encloses part of the gamma chain. F(1) is attached to F(0) by a central stalk formed by the gamma and epsilon chains, while a peripheral stalk is formed by the delta and b chains.

It localises to the cell inner membrane. Its function is as follows. F(1)F(0) ATP synthase produces ATP from ADP in the presence of a proton or sodium gradient. F-type ATPases consist of two structural domains, F(1) containing the extramembraneous catalytic core and F(0) containing the membrane proton channel, linked together by a central stalk and a peripheral stalk. During catalysis, ATP synthesis in the catalytic domain of F(1) is coupled via a rotary mechanism of the central stalk subunits to proton translocation. Functionally, component of the F(0) channel, it forms part of the peripheral stalk, linking F(1) to F(0). The b'-subunit is a diverged and duplicated form of b found in plants and photosynthetic bacteria. This is ATP synthase subunit b 2 (atpF2) from Rhodospirillum rubrum (strain ATCC 11170 / ATH 1.1.1 / DSM 467 / LMG 4362 / NCIMB 8255 / S1).